The sequence spans 130 residues: Flagellar assembly factor FliW (130 aa).

The protein belongs to the FliW family. In terms of assembly, interacts with translational regulator CsrA and flagellin(s).

It localises to the cytoplasm. Acts as an anti-CsrA protein, binds CsrA and prevents it from repressing translation of its target genes, one of which is flagellin. Binds to flagellin and participates in the assembly of the flagellum. This chain is Flagellar assembly factor FliW, found in Borrelia turicatae (strain 91E135).